The primary structure comprises 432 residues: Cytochrome c biogenesis protein CcsB (432 aa).

A run of 3 helical transmembrane segments spans residues 14–34, 72–92, and 162–182; these read LRIA…GTAI, SSWF…CSWR, and VGPM…VWGS.

It belongs to the Ccs1/CcsB family. In terms of assembly, may interact with CcsA.

Its subcellular location is the cellular thylakoid membrane. Required during biogenesis of c-type cytochromes (cytochrome c6 and cytochrome f) at the step of heme attachment. The sequence is that of Cytochrome c biogenesis protein CcsB from Prochlorococcus marinus (strain MIT 9303).